Here is an 833-residue protein sequence, read N- to C-terminus: Leucine--tRNA ligase (833 aa).

A 'HIGH' region motif is present at residues 41 to 52 (PYPSGAGLHVGH). Positions 610 to 614 (KMSKS) match the 'KMSKS' region motif. Lysine 613 lines the ATP pocket.

This sequence belongs to the class-I aminoacyl-tRNA synthetase family.

It localises to the cytoplasm. The catalysed reaction is tRNA(Leu) + L-leucine + ATP = L-leucyl-tRNA(Leu) + AMP + diphosphate. The protein is Leucine--tRNA ligase of Streptococcus pyogenes serotype M3 (strain ATCC BAA-595 / MGAS315).